The following is a 502-amino-acid chain: ATP synthase subunit alpha (502 aa).

169 to 176 (GDRQTGKT) is a binding site for ATP.

Belongs to the ATPase alpha/beta chains family. As to quaternary structure, F-type ATPases have 2 components, CF(1) - the catalytic core - and CF(0) - the membrane proton channel. CF(1) has five subunits: alpha(3), beta(3), gamma(1), delta(1), epsilon(1). CF(0) has three main subunits: a(1), b(2) and c(9-12). The alpha and beta chains form an alternating ring which encloses part of the gamma chain. CF(1) is attached to CF(0) by a central stalk formed by the gamma and epsilon chains, while a peripheral stalk is formed by the delta and b chains.

The protein resides in the cell membrane. It carries out the reaction ATP + H2O + 4 H(+)(in) = ADP + phosphate + 5 H(+)(out). Its function is as follows. Produces ATP from ADP in the presence of a proton gradient across the membrane. The alpha chain is a regulatory subunit. The sequence is that of ATP synthase subunit alpha from Priestia megaterium (strain ATCC 12872 / QMB1551) (Bacillus megaterium).